The following is a 263-amino-acid chain: HLA class II histocompatibility antigen, DM beta chain (263 aa).

Positions M1–A18 are cleaved as a signal peptide. The tract at residues G19–T112 is beta-1. Residues G19–K218 lie on the Lumenal side of the membrane. Cystine bridges form between C29–C97 and C43–C53. N110 carries an N-linked (GlcNAc...) asparagine glycan. The tract at residues R113–W207 is beta-2. The Ig-like C1-type domain occupies P114–T208. Residues C135 and C192 are joined by a disulfide bond. The segment at T208 to K218 is connecting peptide. The chain crosses the membrane as a helical span at residues V219 to S239. Over W240–S263 the chain is Cytoplasmic. The YXXZ motif motif lies at Y248–L251.

Belongs to the MHC class II family. As to quaternary structure, heterodimer of an alpha chain (DMA) and a beta chain (DMB). Interacts with MHCII; this interaction mediates rapid selection of high-affinity peptides in a pH-dependent manner, with an optimum at pH 5.5.

Its subcellular location is the late endosome membrane. It localises to the lysosome membrane. Its function is as follows. Plays a critical role in catalyzing the release of class II-associated invariant chain peptide (CLIP) from newly synthesized MHC class II molecules and freeing the peptide binding site for acquisition of antigenic peptides. In B-cells, the interaction between HLA-DM and MHC class II molecules is regulated by HLA-DO. This is HLA class II histocompatibility antigen, DM beta chain (HLA-DMB) from Homo sapiens (Human).